A 431-amino-acid polypeptide reads, in one-letter code: Serine--tRNA ligase (431 aa).

Residue 238-240 coordinates L-serine; the sequence is TAE. 269 to 271 contacts ATP; sequence RSE. Glu292 contributes to the L-serine binding site. Residue 356-359 participates in ATP binding; sequence EISS. Position 392 (Ser392) interacts with L-serine.

Belongs to the class-II aminoacyl-tRNA synthetase family. Type-1 seryl-tRNA synthetase subfamily. Homodimer. The tRNA molecule binds across the dimer.

The protein resides in the cytoplasm. It catalyses the reaction tRNA(Ser) + L-serine + ATP = L-seryl-tRNA(Ser) + AMP + diphosphate + H(+). The catalysed reaction is tRNA(Sec) + L-serine + ATP = L-seryl-tRNA(Sec) + AMP + diphosphate + H(+). The protein operates within aminoacyl-tRNA biosynthesis; selenocysteinyl-tRNA(Sec) biosynthesis; L-seryl-tRNA(Sec) from L-serine and tRNA(Sec): step 1/1. In terms of biological role, catalyzes the attachment of serine to tRNA(Ser). Is also able to aminoacylate tRNA(Sec) with serine, to form the misacylated tRNA L-seryl-tRNA(Sec), which will be further converted into selenocysteinyl-tRNA(Sec). This is Serine--tRNA ligase from Pectobacterium carotovorum subsp. carotovorum (strain PC1).